We begin with the raw amino-acid sequence, 447 residues long: Acidic leucine-rich nuclear phosphoprotein 32-related protein (447 aa).

3 LRR repeats span residues Asn49–Gly70, Asn71–Val90, and Ser96–Ala117. The LRRCT domain maps to Cys129–Glu167. Residues Asp155–Arg447 are disordered. Composition is skewed to acidic residues over residues Glu163 to Gly194 and Val215 to Glu231. Residues Gln232–Arg242 show a composition bias toward polar residues. Acidic residues-rich tracts occupy residues Val256–Val277, Glu284–Asp309, Gly336–Gly374, Pro397–Pro415, and Asp433–Arg447.

It belongs to the ANP32 family.

The chain is Acidic leucine-rich nuclear phosphoprotein 32-related protein from Arabidopsis thaliana (Mouse-ear cress).